The primary structure comprises 664 residues: Prelamin-A/C (664 aa).

Met-1 carries the N-acetylmethionine modification. The tract at residues 1–25 (METPSQRRATRSGAQASSTPLSPTR) is disordered. The head stretch occupies residues 1 to 33 (METPSQRRATRSGAQASSTPLSPTRITRLQEKE). The interaction with MLIP stretch occupies residues 1-130 (METPSQRRAT…TKKEGDLIAA (130 aa)). Thr-3 bears the Phosphothreonine mark. A Phosphoserine modification is found at Ser-5. Position 10 is a phosphothreonine (Thr-10). Residues Ser-12 and Ser-18 each carry the phosphoserine modification. A Phosphothreonine modification is found at Thr-19. Ser-22 carries the phosphoserine; by CDK1 modification. In terms of domain architecture, IF rod spans 31 to 387 (EKEDLQELND…KLLEGEEERL (357 aa)). Residue Lys-32 is modified to N6-acetyllysine; alternate. An N6-succinyllysine; alternate modification is found at Lys-32. Residue Lys-32 forms a Glycyl lysine isopeptide (Lys-Gly) (interchain with G-Cter in SUMO2); alternate linkage. The tract at residues 34–70 (DLQELNDRLAVYIDRVRSLETENAGLRLRITESEEVV) is coil 1A. A phosphoserine mark is found at Ser-51, Ser-66, and Ser-71. The linker 1 stretch occupies residues 71–80 (SREVSGIKAA). N6-acetyllysine occurs at positions 78 and 97. The coil 1B stretch occupies residues 81 to 218 (YEAELGDARK…NIYSEELRET (138 aa)). Lys-97 is covalently cross-linked (Glycyl lysine isopeptide (Lys-Gly) (interchain with G-Cter in SUMO2)). A Phosphoserine modification is found at Ser-107. Residues Lys-108, Lys-114, Lys-123, Lys-135, Lys-144, and Lys-155 each carry the N6-acetyllysine modification. Lys-171 carries the post-translational modification N6-acetyllysine; alternate. Position 171 is an N6-succinyllysine; alternate (Lys-171). Residue Lys-171 forms a Glycyl lysine isopeptide (Lys-Gly) (interchain with G-Cter in SUMO2); alternate linkage. Residues Lys-180, Lys-201, and Lys-208 each carry the N6-acetyllysine modification. Residue Lys-201 forms a Glycyl lysine isopeptide (Lys-Gly) (interchain with G-Cter in SUMO2); alternate linkage. Residue Lys-201 forms a Glycyl lysine isopeptide (Lys-Gly) (interchain with G-Cter in SUMO); alternate linkage. Lys-208 is covalently cross-linked (Glycyl lysine isopeptide (Lys-Gly) (interchain with G-Cter in SUMO2)). Ser-212 is modified (phosphoserine). Glycyl lysine isopeptide (Lys-Gly) (interchain with G-Cter in SUMO2) cross-links involve residues Lys-219 and Lys-233. Residues 219–242 (KRRHETRLVEIDNGKQREFESRLA) are linker 2. An N6-acetyllysine mark is found at Lys-233, Lys-260, Lys-265, and Lys-270. A coil 2 region spans residues 243–383 (DALQELRAQH…HAYRKLLEGE (141 aa)). The tract at residues 259-331 (YKKELEKTYS…DLEDSLARER (73 aa)) is necessary and sufficient for the interaction with IFFO1. Lys-260 is covalently cross-linked (Glycyl lysine isopeptide (Lys-Gly) (interchain with G-Cter in SUMO2); alternate). Lys-270 is covalently cross-linked (Glycyl lysine isopeptide (Lys-Gly) (interchain with G-Cter in SUMO2); alternate). Ser-277 carries the post-translational modification Phosphoserine. Ser-282 is modified (phosphoserine; by ATR). Ser-301 and Ser-307 each carry phosphoserine. Lys-311 participates in a covalent cross-link: Glycyl lysine isopeptide (Lys-Gly) (interchain with G-Cter in SUMO2); alternate. Lys-311, Lys-316, and Lys-341 each carry N6-acetyllysine. Glycyl lysine isopeptide (Lys-Gly) (interchain with G-Cter in SUMO2) cross-links involve residues Lys-366 and Lys-378. The segment at 384–442 (EERLRLSPSPTSQRSRGRASSHSSQTQGGGSVTKKRKLESTESRSSFSQHARTSGRVAV) is disordered. The interval 384–664 (EERLRLSPSP…TQSPQNCSIM (281 aa)) is tail. Ser-390 bears the Phosphoserine mark. Ser-392 bears the Phosphoserine; by CDK1 mark. Ser-395 is modified (phosphoserine; by ATR). Residues Ser-398, Ser-403, Ser-404, Ser-406, Ser-407, and Ser-414 each carry the phosphoserine modification. Thr-416 is subject to Phosphothreonine. Lys-417 carries the post-translational modification N6-acetyllysine. Residues Lys-417 and Lys-420 each participate in a glycyl lysine isopeptide (Lys-Gly) (interchain with G-Cter in SUMO2) cross-link. Positions 417–422 (KKRKLE) match the Nuclear localization signal motif. Residues Ser-423, Ser-426, Ser-429, and Ser-431 each carry the phosphoserine modification. The segment covering 426-435 (SRSSFSQHAR) has biased composition (polar residues). An LTD domain is found at 428–545 (SSFSQHARTS…EEVAMRKLVR (118 aa)). Lys-450 participates in a covalent cross-link: Glycyl lysine isopeptide (Lys-Gly) (interchain with G-Cter in SUMO2); alternate. 2 positions are modified to N6-acetyllysine: Lys-450 and Lys-457. Residues Ser-458 and Ser-463 each carry the phosphoserine modification. Glycyl lysine isopeptide (Lys-Gly) (interchain with G-Cter in SUMO2) cross-links involve residues Lys-470 and Lys-486. Position 486 is an N6-acetyllysine (Lys-486). Phosphothreonine occurs at positions 496, 505, and 510. Phosphoserine occurs at positions 533 and 546. At Thr-548 the chain carries Phosphothreonine. Residues 552-576 (DDEDEDGDDLLHHHHGSHCSSSGDP) are disordered. 2 positions are modified to phosphoserine: Ser-568 and Ser-571. Lys-597 participates in a covalent cross-link: Glycyl lysine isopeptide (Lys-Gly) (interchain with G-Cter in SUMO2); alternate. Lys-597 participates in a covalent cross-link: Glycyl lysine isopeptide (Lys-Gly) (interchain with G-Cter in SUMO1); alternate. The interval 598–619 (ASASGSGAQVGGPISSGSSASS) is disordered. Phosphoserine is present on residues Ser-612, Ser-613, Ser-616, and Ser-619. O-linked (GlcNAc) serine glycosylation is found at Ser-625 and Ser-628. Residues Ser-628, Ser-632, Ser-636, and Ser-652 each carry the phosphoserine modification. Positions 647–661 (LLGNSSPRTQSPQNC) are cleaved as a propeptide — removed in Lamin-A/C form. Position 661 is a cysteine methyl ester (Cys-661). Residue Cys-661 is the site of S-farnesyl cysteine attachment. Residues 662–664 (SIM) constitute a propeptide, removed in Prelamin-A/C form and in Lamin-A/C form.

This sequence belongs to the intermediate filament family. As to quaternary structure, homodimer of lamin A and lamin C. Lamin dimers then assemble into dimeric head-to-tail polymers. Ultimately, two head-to-tail polymers assemble laterally into a protofilament with a uniformly shaped rod of 3.5 nm in diameter. Interacts with lamin-associated polypeptides IA, IB and TMPO-alpha, RB1 and with emerin. Interacts with SREBF1, SREBF2, SUN2 and TMEM43. Interacts with TMEM201. Proteolytically processed isoform A interacts with NARF. Interacts with SUN1. Interacts with MLIP. Interacts with DMPK; may regulate nuclear envelope stability. Interacts with SUV39H1; the interaction increases stability of SUV39H1. Interacts with SYNE2. Interacts with ITSN1 isoform 2. Interacts with IFFO1; enables the formation of an interior nucleoskeleton that is recruited to DNA double-strand breaks. In terms of assembly, interacts with EMD. Interacts (via C-terminus) with LEMD2 (via N-terminus) (in vitro). In terms of processing, proteolytic cleavage of the C-terminal of 18 residues of prelamin-A/C results in the production of lamin-A/C. The prelamin-A/C maturation pathway includes farnesylation of CAAX motif by protein farnesyltransferase (FNTA and FNTB), removal of the last three amino acids (-AAX) by RCE1/FACE2 and/or ZMPSTE24, methylation of the C-terminal cysteine by ICMT and endoproteolytic removal of the last 15 C-terminal amino acids by ZMPSTE24. Proteolytic cleavage requires prior farnesylation and methylation, and absence of these blocks cleavage. Post-translationally, farnesylation of prelamin-A/C facilitates nuclear envelope targeting. Phosphorylation plays a key role in lamin organization, subcellular localization and nuclear envelope disintegration. Phosphorylation by CDK1 at Ser-22 and Ser-392 at the onset of mitosis drives lamin disassembly and nuclear envelope breakdown. Phosphorylation at Ser-22 and Ser-392 during interphase promotes localization to the nucleoplasm and regulates lamina assembly. Phosphorylation at Ser-22, Ser-392 and Ser-628 during interphase causes redistribution between the nucleus and the cytoplasm. Phosphorylation at Ser-22 by CDK1 regulates matrix stiffness. Phosphorylation status of Ser-22 determines its localization between double-strand break (DSB) sites and the nuclear matrix. Phosphorylated by ATR at Ser-282 in response to DNA damage, leading to lamin disassembly and nuclear envelope rupture. Phosphorylation also regulates stability in micronuclei arising from genome instability: phosphorylation at Ser-395 by ATR in response to genome instability and double-stranded DNA breaks primes LMNA for subsequent phosphorylation at Ser-392 by CDK1 and micronuclei envelope rupture. The rupture of micronuclear envelope triggers the cGAS-STING pathway thereby activating the type I interferon response and innate immunity. In terms of processing, acetylation by KAT8 is required for nuclear architecture. Post-translationally, sumoylation is necessary for the localization to the nuclear envelope. In the arteries, prelamin-A/C accumulation is not observed in young healthy vessels but is prevalent in medial vascular smooth muscle cells (VSMCs) from aged individuals and in atherosclerotic lesions, where it often colocalizes with senescent and degenerate VSMCs. Prelamin-A/C expression increases with age and disease. In normal aging, the accumulation of prelamin-A/C is caused in part by the down-regulation of ZMPSTE24/FACE1 in response to oxidative stress.

The protein localises to the nucleus lamina. It is found in the nucleus envelope. Its subcellular location is the nucleus. The protein resides in the nucleoplasm. It localises to the nucleus matrix. The protein localises to the nucleus speckle. Lamins are intermediate filament proteins that assemble into a filamentous meshwork, and which constitute the major components of the nuclear lamina, a fibrous layer on the nucleoplasmic side of the inner nuclear membrane. Lamins provide a framework for the nuclear envelope, bridging the nuclear envelope and chromatin, thereby playing an important role in nuclear assembly, chromatin organization, nuclear membrane and telomere dynamics. Lamin A and C also regulate matrix stiffness by conferring nuclear mechanical properties. The structural integrity of the lamina is strictly controlled by the cell cycle, as seen by the disintegration and formation of the nuclear envelope in prophase and telophase, respectively. Lamin A and C are present in equal amounts in the lamina of mammals. Also invoved in DNA repair: recruited by DNA repair proteins XRCC4 and IFFO1 to the DNA double-strand breaks (DSBs) to prevent chromosome translocation by immobilizing broken DNA ends. Required for normal development of peripheral nervous system and skeletal muscle and for muscle satellite cell proliferation. Required for osteoblastogenesis and bone formation. Also prevents fat infiltration of muscle and bone marrow, helping to maintain the volume and strength of skeletal muscle and bone. Required for cardiac homeostasis. Its function is as follows. Prelamin-A/C can accelerate smooth muscle cell senescence. It acts to disrupt mitosis and induce DNA damage in vascular smooth muscle cells (VSMCs), leading to mitotic failure, genomic instability, and premature senescence. The sequence is that of Prelamin-A/C (LMNA) from Homo sapiens (Human).